A 209-amino-acid chain; its full sequence is Thymidylate kinase (209 aa).

10 to 17 (GIDGCGKT) contributes to the ATP binding site.

The protein belongs to the thymidylate kinase family.

The catalysed reaction is dTMP + ATP = dTDP + ADP. Phosphorylation of dTMP to form dTDP in both de novo and salvage pathways of dTTP synthesis. The chain is Thymidylate kinase from Synechococcus sp. (strain CC9605).